A 346-amino-acid polypeptide reads, in one-letter code: Growth hormone-inducible transmembrane protein (346 aa).

Residues 1–45 (MLAARLVCLRTLPSRVFQPTFITKASPLVKNSITKNQWLVTPSRE) constitute a mitochondrion transit peptide. At 46–83 (YATKTRIRTHRGKTGQELKEAALEPSMEKIFKIDQMGR) the chain is on the mitochondrial matrix side. Residues 84–104 (WFVAGGAAVGLGALCYYGLGM) form a helical membrane-spanning segment. Residues 105-126 (SNEIGAIEKAVIWPQYVKDRIH) are Mitochondrial intermembrane-facing. Residues 127 to 147 (STYMYLAGSIGLTALSALAVA) traverse the membrane as a helical segment. Over 148-160 (RTPALMNFMMTGS) the chain is Mitochondrial matrix. A helical transmembrane segment spans residues 161–181 (WVTIGATFAAMIGAGMLVHSI). At 182 to 191 (SYEQSPGPKH) the chain is on the mitochondrial intermembrane side. The helical transmembrane segment at 192-212 (LAWMLHSGVMGAVVAPLTILG) threads the bilayer. The Mitochondrial matrix portion of the chain corresponds to 213–214 (GP). A helical transmembrane segment spans residues 215 to 235 (LLLRAAWYTAGIVGGLSTVAM). Over 236-245 (CAPSEKFLNM) the chain is Mitochondrial intermembrane. A helical membrane pass occupies residues 246-266 (GAPLGVGLGLVFASSLGSMFL). Topologically, residues 267–272 (PPTSVA) are mitochondrial matrix. A helical transmembrane segment spans residues 273 to 293 (GATLYSVAMYGGLVLFSMFLL). Over 294-346 (YDTQKVIKRAEITPMYGAQKYDPINSMLTIYMDTLNIFMRVATMLATGSNRKK) the chain is Mitochondrial intermembrane.

This sequence belongs to the BI1 family. In terms of assembly, interacts with LETM1 and AFG3L2. Post-translationally, undergoes AFG3L2-mediated proteolytic degradation, upon hyperpolarization of mitochondria.

Its subcellular location is the mitochondrion inner membrane. The enzyme catalyses Ca(2+)(in) + 2 H(+)(out) = Ca(2+)(out) + 2 H(+)(in). It catalyses the reaction K(+)(in) + H(+)(out) = K(+)(out) + H(+)(in). In terms of biological role, plays an important role in maintenance of mitochondrial morphology and in mediating either calcium or potassium/proton antiport. Mediates proton-dependent calcium efflux from mitochondrion. Also functions as an electroneutral mitochondrial proton/potassium exchanger. Required for the mitochondrial tubular network and cristae organization. Involved in apoptotic release of cytochrome c. Inhibits AFG3L2 proteolytic activity, stimulating respiration and stabilizing respiratory enzymes in actively respiring mitochondria. However, when mitochondria become hyperpolarized, GHITM loses its inhibitory activity toward AFG3L2 and the now active AFG3L2 turns first on GHITM and, if hyperpolarization persists, on other proteins of the mitochondria, leading to a broad remodeling of the mitochondrial proteome. The polypeptide is Growth hormone-inducible transmembrane protein (Ghitm) (Mus musculus (Mouse)).